The chain runs to 591 residues: MSINSAMLAGVSGLIANSSALAAISDNIANVNTVGFKRSTSNFSTLVTSGNKNQTYSAGGVKAQTHQFISQQGLTQSTTSNLDISISGAGFFVTTEKPENLTATDTRSFTRAGSFQLDNLGYLRNDAGLYLQGWLADPVSGLITPDPSDLMQLASINVGSVGGTAEKTTRVGVNANLRSEQPVAAAVSYKVGTAGSPSKTNVVDSATNSHNYDVVYSSTGIANPVSGNNEYLVDIKENGVIVATGKVAYDAATNELVSSTIDYKGASPVTGSMTTTRINAAGTTVNLADLGIVNASGADDAEVVAGKLYDPSTWSMSDYAKDNSKGVKPDFEVQIPLSDSKGGQRTVTLSMLKGPGPNQWYAELRAKPGDLANNGNGQISTGIIEFTTDGKLKNTGSLFGTTSPTAITIKSSGYIAPTVTPPAVQPPTPPTWADALGIDEQEVQIDLASAAGGLTQYNSQSVVQSVNTNGTAFGNLTNIEIDEGGYVSAIFDNGVTRRIAQVAIATFSNPNGLKGVNGNAYRVTNESGTYSLKAPSQGGAGALAPSTLEASTVDLSQEFTGLITTQRAYSASSKIITTADQMLEELLNIKR.

Belongs to the flagella basal body rod proteins family.

The protein localises to the bacterial flagellum basal body. The polypeptide is Flagellar hook protein FlgE (flgE) (Caulobacter vibrioides (strain ATCC 19089 / CIP 103742 / CB 15) (Caulobacter crescentus)).